A 1406-amino-acid polypeptide reads, in one-letter code: EF-hand calcium-binding domain-containing protein 5 (1406 aa).

The segment at 255–655 (NKDLPQQQRD…KACEPKPQHV (401 aa)) is disordered. 8 stretches are compositionally biased toward polar residues: residues 258–294 (LPQQ…SLTG), 322–334 (RRSS…QQRG), 342–354 (RRSS…QQRG), 362–373 (RRSSTVEQTRQR), 382–393 (RRSSTVEQTQRR), 402–414 (RRSS…QQRG), 422–434 (RRSS…QQRG), and 442–464 (RRSS…SLPE). A compositionally biased stretch (basic and acidic residues) spans 465 to 477 (QESHRGSITEGSH). Over residues 501-513 (DDSGSAGSRRGSG) the composition is skewed to low complexity. The segment covering 564-577 (QELDEDSTPQLEDD) has biased composition (acidic residues). 2 stretches are compositionally biased toward basic and acidic residues: residues 578–598 (SALK…EEKP) and 638–655 (SKRD…PQHV). The EF-hand domain maps to 773 to 808 (RRRILLQAIFEKWDNDGSGFLDLNEVDDLLYTYKEG). Residues D786, D788, S790, and E797 each contribute to the Ca(2+) site.

The sequence is that of EF-hand calcium-binding domain-containing protein 5 (Efcab5) from Mus musculus (Mouse).